The primary structure comprises 963 residues: Reversion-inducing cysteine-rich protein with Kazal motifs (963 aa).

A signal peptide spans 1–28; sequence MAAAVAAWPWALFCLAAVPPLLSPGAAG. The Knot 1 repeat unit spans residues 31-78; sequence CCYHAKDNLMCRDVCEQILSSKSDSRLKHLLQRAPEYCPESMGEVWGC. The 5 X Knot repeats stretch occupies residues 31–332; it reads CCYHAKDNLM…NAVEVSMLTC (302 aa). The N-linked (GlcNAc...) asparagine glycan is linked to Asn-80. 2 Knot repeats span residues 98 to 135 and 145 to 191; these read CCEL…LFSC and CCSY…LIHC. Asn-194 carries N-linked (GlcNAc...) asparagine glycosylation. Knot repeat units lie at residues 210–257 and 286–332; these read CCDR…LWQC and CCSK…MLTC. N-linked (GlcNAc...) asparagine glycosylation is found at Asn-291 and Asn-346. Kazal-like domains follow at residues 621–667, 692–746, and 749–783; these read KFTG…SCIS, SFGK…PCQP, and KSVE…HCQA. Cystine bridges form between Cys-627/Cys-652, Cys-629/Cys-648, Cys-637/Cys-665, Cys-710/Cys-729, Cys-718/Cys-744, and Cys-755/Cys-781. The GPI-anchor amidated serine moiety is linked to residue Ser-936. Residues 937-963 constitute a propeptide that is removed on maturation; sequence PSVKVGPVLHCLFISFSFTLLKLMDYI.

Belongs to the RECK family. As to quaternary structure, interacts (via knot repeats) with WNT7A (via disordered linker region); the interaction is direct. Interacts (via knot repeats) with WNT7B (via disordered linker region); the interaction is direct. Interacts with ADGRA2; the interaction is direct. Post-translationally, localizes to the plasma membrane via its GPI-anchor. Released from the plasma membrane following cleavage of the GPI-anchor by GDPD5/GPE2.

It localises to the cell membrane. In terms of biological role, functions together with ADGRA2 to enable brain endothelial cells to selectively respond to Wnt7 signals (WNT7A or WNT7B). Plays a key role in Wnt7-specific responses: required for central nervous system (CNS) angiogenesis and blood-brain barrier regulation. Acts as a Wnt7-specific coactivator of canonical Wnt signaling by decoding Wnt ligands: acts by interacting specifically with the disordered linker region of Wnt7, thereby conferring ligand selectivity for Wnt7. ADGRA2 is then required to deliver RECK-bound Wnt7 to frizzled by assembling a higher-order RECK-ADGRA2-Fzd-LRP5-LRP6 complex. Also acts as a serine protease inhibitor. The protein is Reversion-inducing cysteine-rich protein with Kazal motifs of Gallus gallus (Chicken).